Here is a 297-residue protein sequence, read N- to C-terminus: Glycine--tRNA ligase alpha subunit (297 aa).

Belongs to the class-II aminoacyl-tRNA synthetase family. As to quaternary structure, tetramer of two alpha and two beta subunits.

It is found in the cytoplasm. The enzyme catalyses tRNA(Gly) + glycine + ATP = glycyl-tRNA(Gly) + AMP + diphosphate. The polypeptide is Glycine--tRNA ligase alpha subunit (Sulfurihydrogenibium sp. (strain YO3AOP1)).